Consider the following 767-residue polypeptide: Polyketide biosynthesis protein PksE (767 aa).

The interval 1–312 is acyl transferase; it reads MITYVFPGQG…QRNVQAGITA (312 aa). Residues serine 87 and histidine 193 contribute to the active site.

In the N-terminal section; belongs to the FabD family.

It is found in the cytoplasm. It catalyses the reaction holo-[ACP] + malonyl-CoA = malonyl-[ACP] + CoA. It functions in the pathway antibiotic biosynthesis; bacillaene biosynthesis. Probably involved in some intermediate steps for the synthesis of the antibiotic polyketide bacillaene which is involved in secondary metabolism. Probably has an acyl transferase activity and could also have a flavin mononucleotide-dependent oxidoreductase activity. This Bacillus subtilis (strain 168) protein is Polyketide biosynthesis protein PksE (pksE).